The following is an 859-amino-acid chain: Anoctamin-7 (859 aa).

Topologically, residues 1-297 (MLRGQAREED…YFAWLGFYTG (297 aa)) are cytoplasmic. The disordered stretch occupies residues 25–50 (GCSYGSTAQASEAGKQQVAPSRVGSS). A helical transmembrane segment spans residues 298-318 (WLLPAAVVGTVVFLVGCFLVF). Residues 319-362 (SDIPTQELCHSSDSFDMCPLCSDCSFWLLSSACTLAQAGRLFDH) lie on the Extracellular side of the membrane. The helical transmembrane segment at 363 to 383 (GGTVFFSLFMALWAVLLLEYW) threads the bilayer. Residues 384 to 441 (KRKNATLAYRWDCSDYEDIEERPRPQFAATAPMTALNPITGEDEPYFPEKNRVRRMLA) lie on the Cytoplasmic side of the membrane. Residues 442 to 462 (GSVVLLMMVAVVIMCLVSVIL) form a helical membrane-spanning segment. Over 463-492 (YRAVMAIIVSRSDNAFLSAWASRIASLTGS) the chain is Extracellular. Residues 493–513 (VVNLVFILILSKVYVLLAQVL) traverse the membrane as a helical segment. Topologically, residues 514 to 530 (TRWEMHRTQTEFEDAFT) are cytoplasmic. A helical transmembrane segment spans residues 531–551 (LKVFIFQFVNFYASPVYIAFF). At 552–651 (KGRFVGYPGN…FHEYLEMVLQ (100 aa)) the chain is on the extracellular side. A helical membrane pass occupies residues 652–672 (FGFVTIFVAACPLAPLFALLN). Topologically, residues 673–700 (NWVEIRLDARKFVCEYRRPVAERAQDIG) are cytoplasmic. A helical membrane pass occupies residues 701–721 (IWFHILTGLTHLAVISNAFLL). At 722-780 (AFSSDFLPRVYYSWTHAPDLHGFLNFTLARAPPTFTSAHNRTCRYRAFRDDDGHYSPTY) the chain is on the extracellular side. Residues N746 and N761 are each glycosylated (N-linked (GlcNAc...) asparagine). The helical transmembrane segment at 781–801 (WTLLAIRLAFVIVFEHVVFSI) threads the bilayer. At 802 to 859 (GRVLDLLVPDIPESVEIKVKREYYLAKQALAENEALLGATGVKDDQPPSSEPSLGLPA) the chain is on the cytoplasmic side.

The protein belongs to the anoctamin family. As to expression, highly expressed in the stomach. Expressed at low levels in small intestine and large intestine.

It localises to the cell membrane. The protein resides in the endoplasmic reticulum. The enzyme catalyses a 1,2-diacyl-sn-glycero-3-phospho-L-serine(in) = a 1,2-diacyl-sn-glycero-3-phospho-L-serine(out). It catalyses the reaction a beta-D-galactosyl-(1&lt;-&gt;1')-N-acylsphing-4-enine(out) = a beta-D-galactosyl-(1&lt;-&gt;1')-N-acylsphing-4-enine(in). The catalysed reaction is a 1,2-diacyl-sn-glycero-3-phosphocholine(in) = a 1,2-diacyl-sn-glycero-3-phosphocholine(out). In terms of biological role, has calcium-dependent phospholipid scramblase activity; scrambles phosphatidylserine, phosphatidylcholine and galactosylceramide. Does not exhibit calcium-activated chloride channel (CaCC) activity. May play a role in cell-cell interactions. The sequence is that of Anoctamin-7 (Ano7) from Mus musculus (Mouse).